Here is a 215-residue protein sequence, read N- to C-terminus: Large ribosomal subunit protein bL25 (215 aa).

Residues 192 to 203 (EEATEEEEEAAE) are compositionally biased toward acidic residues. Positions 192-215 (EEATEEEEEAAEPEVIKRKEEEEE) are disordered. Residues 205 to 215 (EVIKRKEEEEE) show a composition bias toward basic and acidic residues.

Belongs to the bacterial ribosomal protein bL25 family. CTC subfamily. As to quaternary structure, part of the 50S ribosomal subunit; part of the 5S rRNA/L5/L18/L25 subcomplex. Contacts the 5S rRNA. Binds to the 5S rRNA independently of L5 and L18.

Its function is as follows. This is one of the proteins that binds to the 5S RNA in the ribosome where it forms part of the central protuberance. The protein is Large ribosomal subunit protein bL25 of Thermotoga sp. (strain RQ2).